A 347-amino-acid polypeptide reads, in one-letter code: Microtubule-associated protein Jupiter (347 aa).

Over residues 1-14 (MISNFDCTDNQASS) the composition is skewed to polar residues. The segment at 1–33 (MISNFDCTDNQASSKVLRPPGGGSSDIFGSEMP) is disordered. At Ser24 the chain carries Phosphoserine. A phosphothreonine mark is found at Thr35 and Thr96. A phosphoserine mark is found at Ser105, Ser134, and Ser145. Disordered stretches follow at residues 127–193 (HYNG…PTPP) and 303–347 (GNPV…SGLW). Residues 132–145 (SGSVSSASSSVSSS) show a composition bias toward low complexity. Polar residues predominate over residues 146–164 (TENLKMNSGSRSVFRNMST). Pro residues predominate over residues 181 to 193 (PPSPVPIEVPTPP).

This sequence belongs to the MAP Jupiter family.

It localises to the nucleus. The protein resides in the cytoplasm. The protein localises to the cytoskeleton. It is found in the spindle. Its function is as follows. Binds to all microtubule populations. This chain is Microtubule-associated protein Jupiter, found in Drosophila yakuba (Fruit fly).